Here is a 215-residue protein sequence, read N- to C-terminus: Protein LURP-one-related 16 (215 aa).

A lipid anchor (N-myristoyl glycine) is attached at Gly-2.

The protein belongs to the LOR family.

Functionally, might be related to the phospholipid scramblase and tubby-like superfamily of membrane tethered transcription factors. In Arabidopsis thaliana (Mouse-ear cress), this protein is Protein LURP-one-related 16.